Consider the following 126-residue polypeptide: Nucleoside diphosphate kinase B (126 aa).

The ATP site is built by Lys6, Phe37, Thr68, Arg79, and Asn89. His92 (pros-phosphohistidine intermediate) is an active-site residue.

It belongs to the NDK family. It depends on Mg(2+) as a cofactor.

It localises to the cytoplasm. It is found in the nucleus. The protein resides in the cell projection. Its subcellular location is the lamellipodium. The protein localises to the ruffle. The catalysed reaction is a 2'-deoxyribonucleoside 5'-diphosphate + ATP = a 2'-deoxyribonucleoside 5'-triphosphate + ADP. The enzyme catalyses a ribonucleoside 5'-diphosphate + ATP = a ribonucleoside 5'-triphosphate + ADP. In terms of biological role, major role in the synthesis of nucleoside triphosphates other than ATP. The chain is Nucleoside diphosphate kinase B (nme2) from Macruronus magellanicus (Patagonian grenadier).